The chain runs to 562 residues: Formate--tetrahydrofolate ligase (562 aa).

Residue 71 to 78 coordinates ATP; the sequence is TPAGEGKS.

Belongs to the formate--tetrahydrofolate ligase family.

The catalysed reaction is (6S)-5,6,7,8-tetrahydrofolate + formate + ATP = (6R)-10-formyltetrahydrofolate + ADP + phosphate. It participates in one-carbon metabolism; tetrahydrofolate interconversion. The sequence is that of Formate--tetrahydrofolate ligase from Bacillus thuringiensis (strain Al Hakam).